We begin with the raw amino-acid sequence, 312 residues long: Aspartate carbamoyltransferase catalytic subunit (312 aa).

2 residues coordinate carbamoyl phosphate: Arg-58 and Thr-59. Position 86 (Lys-86) interacts with L-aspartate. Arg-108, His-136, and Gln-139 together coordinate carbamoyl phosphate. L-aspartate contacts are provided by Arg-169 and Arg-223. The carbamoyl phosphate site is built by Gly-264 and Pro-265.

Belongs to the aspartate/ornithine carbamoyltransferase superfamily. ATCase family. Heterododecamer (2C3:3R2) of six catalytic PyrB chains organized as two trimers (C3), and six regulatory PyrI chains organized as three dimers (R2).

The enzyme catalyses carbamoyl phosphate + L-aspartate = N-carbamoyl-L-aspartate + phosphate + H(+). The protein operates within pyrimidine metabolism; UMP biosynthesis via de novo pathway; (S)-dihydroorotate from bicarbonate: step 2/3. Its function is as follows. Catalyzes the condensation of carbamoyl phosphate and aspartate to form carbamoyl aspartate and inorganic phosphate, the committed step in the de novo pyrimidine nucleotide biosynthesis pathway. The chain is Aspartate carbamoyltransferase catalytic subunit from Acetivibrio thermocellus (strain ATCC 27405 / DSM 1237 / JCM 9322 / NBRC 103400 / NCIMB 10682 / NRRL B-4536 / VPI 7372) (Clostridium thermocellum).